We begin with the raw amino-acid sequence, 517 residues long: Cobyric acid synthase (517 aa).

The GATase cobBQ-type domain occupies 253-453; that stretch reads EVEIAVIKLP…IHGILDNDSL (201 aa). The active-site Nucleophile is Cys-334. His-445 is an active-site residue.

The protein belongs to the CobB/CobQ family. CobQ subfamily.

It participates in cofactor biosynthesis; adenosylcobalamin biosynthesis. Functionally, catalyzes amidations at positions B, D, E, and G on adenosylcobyrinic A,C-diamide. NH(2) groups are provided by glutamine, and one molecule of ATP is hydrogenolyzed for each amidation. The sequence is that of Cobyric acid synthase from Moorella thermoacetica (strain ATCC 39073 / JCM 9320).